The following is a 647-amino-acid chain: Threonine--tRNA ligase (647 aa).

The TGS domain maps to 1–63 (MEVRVEGQMV…PAGCTGIEPV (63 aa)). The tract at residues 244–535 (DHRKLGRELS…LVENFAGALP (292 aa)) is catalytic. Zn(2+) contacts are provided by Cys336, His387, and His512.

Belongs to the class-II aminoacyl-tRNA synthetase family. In terms of assembly, homodimer. The cofactor is Zn(2+).

Its subcellular location is the cytoplasm. It catalyses the reaction tRNA(Thr) + L-threonine + ATP = L-threonyl-tRNA(Thr) + AMP + diphosphate + H(+). Its function is as follows. Catalyzes the attachment of threonine to tRNA(Thr) in a two-step reaction: L-threonine is first activated by ATP to form Thr-AMP and then transferred to the acceptor end of tRNA(Thr). Also edits incorrectly charged L-seryl-tRNA(Thr). The protein is Threonine--tRNA ligase of Desulfovibrio desulfuricans (strain ATCC 27774 / DSM 6949 / MB).